The following is a 93-amino-acid chain: MKQSLAVKTFEDLFAELGERARTRPAGSATVAALDGGVHGLGKKILEEAGEVWLAAEHESDDALAGEISQLLYWTQVLMIARGLSLDDVYRKL.

This sequence belongs to the PRA-PH family.

The protein localises to the cytoplasm. It catalyses the reaction 1-(5-phospho-beta-D-ribosyl)-ATP + H2O = 1-(5-phospho-beta-D-ribosyl)-5'-AMP + diphosphate + H(+). It functions in the pathway amino-acid biosynthesis; L-histidine biosynthesis; L-histidine from 5-phospho-alpha-D-ribose 1-diphosphate: step 2/9. This is Phosphoribosyl-ATP pyrophosphatase from Mycobacterium avium (strain 104).